We begin with the raw amino-acid sequence, 248 residues long: Probable phosphatase VPA0505 (248 aa).

9 residues coordinate Zn(2+): His8, His10, His16, His41, Glu74, His102, His132, Asp194, and His196.

Belongs to the PHP family. Zn(2+) serves as cofactor.

This is Probable phosphatase VPA0505 from Vibrio parahaemolyticus serotype O3:K6 (strain RIMD 2210633).